We begin with the raw amino-acid sequence, 335 residues long: MRPILLSGHERSLNQIKFNRDGDLLFSVAKDKIVCAWWSANGERLGTYNGHQGAIWTVDVSPNTVLLATGSADNTVRLWNVKTGECIKVWDFPTAVKRVEFTPDGSRLLAVTEKRMGFLGTIAVLDINYEDLEAQAEEPSLRITCTESKATVAGWSYLAKYIIAGHEDGSVSQYDSKTGEQLENVQAHEFDNLISDIQFSADRTYFITASKDKSAKLISSRNLAILKTYVADTPLNSAAITPKKEYVILGGGQAAMDVTTTSARQGKFEARFYHKVFEDEIGRVRGHFGPLNTVAVHPNGTAYASGGEDGYVRVHHFDKPYFDFMYEVEREQLRK.

WD repeat units lie at residues 8-47, 50-91, 145-184, 189-228, and 286-325; these read GHERSLNQIKFNRDGDLLFSVAKDKIVCAWWSANGERLGT, GHQG…KVWD, CTESKATVAGWSYLAKYIIAGHEDGSVSQYDSKTGEQLEN, EFDNLISDIQFSADRTYFITASKDKSAKLISSRNLAILKT, and GHFGPLNTVAVHPNGTAYASGGEDGYVRVHHFDKPYFDFM.

This sequence belongs to the eIF-3 subunit I family. Component of the eukaryotic translation initiation factor 3 (eIF-3) complex.

The protein resides in the cytoplasm. Component of the eukaryotic translation initiation factor 3 (eIF-3) complex, which is involved in protein synthesis of a specialized repertoire of mRNAs and, together with other initiation factors, stimulates binding of mRNA and methionyl-tRNAi to the 40S ribosome. The eIF-3 complex specifically targets and initiates translation of a subset of mRNAs involved in cell proliferation. This Aspergillus oryzae (strain ATCC 42149 / RIB 40) (Yellow koji mold) protein is Eukaryotic translation initiation factor 3 subunit I (tif34).